The primary structure comprises 613 residues: ADP-ribosylation factor-binding protein GGA2 (613 aa).

Positions 33 to 163 (ATDPSMSEQD…MLKKQGIIKQ (131 aa)) constitute a VHS domain. In terms of domain architecture, GAT spans 188 to 315 (DEEKSKLLTR…GVLLYKQVME (128 aa)). A unstructured hinge region spans residues 316 to 483 (GRVTFGNRVT…VFVPLESVKP (168 aa)). Disordered stretches follow at residues 389–414 (GQNC…NPSA) and 435–466 (SQKS…SPSS). Positions 399-414 (PSSSTLPGGGVQNPSA) are enriched in polar residues. Residue S400 is modified to Phosphoserine. Positions 484 to 605 (SSLPPLIVYD…SEVGEVKDFP (122 aa)) constitute a GAE domain.

It belongs to the GGA protein family. Monomer. Interacts with NECAP1, TSG101, UBC and AFTPH/aftiphilin. Interacts with CNST. Interacts with GGA1 and GGA3. Binds to clathrin and activated ARFs, such as ARF1, ARF5 and ARF6. Binds RABEP1 and RABGEF1. Interacts with the type-I membrane proteins LRP3, M6PR/CD-MPR, IGF2R/CI-MPR and BACE1. Interacts (via N-terminal VHS domain) with SORL1/sorLA and SORT1 (via C-terminal cytosolic domain). Binds the accessory proteins CCDC91, P200, SYNRG, EPN4 and NECAP2. Interacts with ADRA2B. Interacts (via VHS domain) with PIK4B; the interaction is important for PIK4B location at the Golgi apparatus membrane. In terms of processing, ubiquitinated. As to expression, ubiquitously expressed.

Its subcellular location is the golgi apparatus. It is found in the trans-Golgi network membrane. It localises to the endosome membrane. The protein localises to the early endosome membrane. Its function is as follows. Plays a role in protein sorting and trafficking between the trans-Golgi network (TGN) and endosomes. Mediates the ARF-dependent recruitment of clathrin to the TGN and binds ubiquitinated proteins and membrane cargo molecules with a cytosolic acidic cluster-dileucine (DXXLL) motif. Mediates export of the GPCR receptor ADRA2B to the cell surface. Regulates retrograde transport of phosphorylated form of BACE1 from endosomes to the trans-Golgi network. This Homo sapiens (Human) protein is ADP-ribosylation factor-binding protein GGA2 (GGA2).